Consider the following 86-residue polypeptide: Anti-adapter protein IraP (86 aa).

Positions 1-47 form a coiled coil; that stretch reads MKNLIAELLLKLAQKEEESKELVAQVEALEIIVTAMLRNMAQSEQQM.

The protein belongs to the IraP family. As to quaternary structure, interacts with RssB.

Its subcellular location is the cytoplasm. Inhibits RpoS proteolysis by regulating RssB activity, thereby increasing the stability of the sigma stress factor RpoS especially during phosphate and magnesium starvation, but also in stationary phase and during nitrogen starvation. Its effect on RpoS stability is due to its interaction with RssB, which probably blocks the interaction of RssB with RpoS, and the consequent delivery of the RssB-RpoS complex to the ClpXP protein degradation pathway. This is Anti-adapter protein IraP from Salmonella arizonae (strain ATCC BAA-731 / CDC346-86 / RSK2980).